The following is a 557-amino-acid chain: Dihydroxy-acid dehydratase (557 aa).

[2Fe-2S] cluster is bound at residue C50. D82 is a binding site for Mg(2+). A [2Fe-2S] cluster-binding site is contributed by C123. 2 residues coordinate Mg(2+): D124 and K125. K125 is subject to N6-carboxylysine. C195 serves as a coordination point for [2Fe-2S] cluster. E447 is a Mg(2+) binding site. The Proton acceptor role is filled by S473.

Belongs to the IlvD/Edd family. Homodimer. Requires [2Fe-2S] cluster as cofactor. The cofactor is Mg(2+).

The enzyme catalyses (2R)-2,3-dihydroxy-3-methylbutanoate = 3-methyl-2-oxobutanoate + H2O. It carries out the reaction (2R,3R)-2,3-dihydroxy-3-methylpentanoate = (S)-3-methyl-2-oxopentanoate + H2O. It participates in amino-acid biosynthesis; L-isoleucine biosynthesis; L-isoleucine from 2-oxobutanoate: step 3/4. Its pathway is amino-acid biosynthesis; L-valine biosynthesis; L-valine from pyruvate: step 3/4. Functionally, functions in the biosynthesis of branched-chain amino acids. Catalyzes the dehydration of (2R,3R)-2,3-dihydroxy-3-methylpentanoate (2,3-dihydroxy-3-methylvalerate) into 2-oxo-3-methylpentanoate (2-oxo-3-methylvalerate) and of (2R)-2,3-dihydroxy-3-methylbutanoate (2,3-dihydroxyisovalerate) into 2-oxo-3-methylbutanoate (2-oxoisovalerate), the penultimate precursor to L-isoleucine and L-valine, respectively. The sequence is that of Dihydroxy-acid dehydratase from Burkholderia thailandensis (strain ATCC 700388 / DSM 13276 / CCUG 48851 / CIP 106301 / E264).